A 602-amino-acid chain; its full sequence is Pro-neuregulin-1, membrane-bound isoform (602 aa).

Residues 1–206 (MWATSEGPLQ…MEAEELYQKR (206 aa)) lie on the Extracellular side of the membrane. Asparagine 21 carries N-linked (GlcNAc...) asparagine glycosylation. An Ig-like C2-type domain is found at 29–123 (PKLKEMKNQE…DSTKASVIIT (95 aa)). A disulfide bridge links cysteine 49 with cysteine 105. N-linked (GlcNAc...) asparagine glycans are attached at residues asparagine 113 and asparagine 126. The region spanning 137–181 (HLTKCDIKQKAFCVNGGECYMVKDLPNPPRYLCRCPNEFTGDRCQ) is the EGF-like domain. Cystine bridges form between cysteine 141–cysteine 155, cysteine 149–cysteine 169, and cysteine 171–cysteine 180. The helical transmembrane segment at 207 to 229 (VLTITGICIALLVVGIMCVVAYC) threads the bilayer. Residues 230–602 (KTKKQRKKLH…VIANQDPIAV (373 aa)) are Cytoplasmic-facing. Disordered regions lie at residues 293 to 366 (ETSF…EGNS), 391 to 421 (MTTP…PVSS), 460 to 479 (FNSF…PSPL), and 486 to 553 (EYET…FLSI). Positions 294–314 (TSFSTSHYTSTTHHSMTVTQT) are enriched in low complexity. Polar residues predominate over residues 315–324 (PSHSWSNGHT). Residues 325–341 (ESILSESHSVLVSSSVE) are compositionally biased toward low complexity. A compositionally biased stretch (polar residues) spans 460–474 (FNSFHNNPTHESNSL). The segment covering 504-514 (TNSRRVKRTKP) has biased composition (basic residues). A compositionally biased stretch (low complexity) spans 527 to 536 (DTSSQSTSSE).

It belongs to the neuregulin family. In terms of processing, proteolytic cleavage close to the plasma membrane on the external face leads to the release of the soluble growth factor form. Post-translationally, extensive glycosylation precedes the proteolytic cleavage.

The protein resides in the cell membrane. It localises to the secreted. Its function is as follows. Direct ligand for the ERBB tyrosine kinase receptors. The multiple isoforms perform diverse functions: cysteine-rich domain containing isoforms (isoform 2-isoform 4) probably regulate the expression of nicotinic acetylcholine receptors at developing interneuronal synapses. Isoform Ig-NRG is required for the initial induction and/or maintenance of the mature levels of acetylcholine receptors at neuromuscular synapses. Binds to ERBB3 and integrins to form a complex which is essential for NRG1-ERBB signaling. The sequence is that of Pro-neuregulin-1, membrane-bound isoform (NRG1) from Gallus gallus (Chicken).